The chain runs to 409 residues: Elongation factor Tu, plastid (409 aa).

Residues 10-214 (KPHINIGTIG…KIDSYIPTPI (205 aa)) enclose the tr-type G domain. The tract at residues 19-26 (GHVDHGKT) is G1. 19-26 (GHVDHGKT) serves as a coordination point for GTP. T26 contributes to the Mg(2+) binding site. Positions 60 to 64 (GITIN) are G2. The G3 stretch occupies residues 81–84 (DCPG). Residues 81–85 (DCPGH) and 136–139 (NKED) contribute to the GTP site. A G4 region spans residues 136–139 (NKED). Positions 174-176 (SAL) are G5.

Belongs to the TRAFAC class translation factor GTPase superfamily. Classic translation factor GTPase family. EF-Tu/EF-1A subfamily.

Its subcellular location is the plastid. It catalyses the reaction GTP + H2O = GDP + phosphate + H(+). GTP hydrolase that promotes the GTP-dependent binding of aminoacyl-tRNA to the A-site of ribosomes during protein biosynthesis. The protein is Elongation factor Tu, plastid (tufA) of Euglena longa (Euglenophycean alga).